We begin with the raw amino-acid sequence, 158 residues long: MAEQLNSLEELGTVAKTEAAAPVHVQKLDAQGRAYATGKRKDAVARVWVKPGTGKITVNDKEFEKYFARPVLQMILQQPIVASNRAGQFDIVATVAGGGLSGQAGAVRHGISKALTYYEPGLRTVLKKGGFLTRDSRVVERKKYGKAKARRSFQFSKR.

This sequence belongs to the universal ribosomal protein uS9 family.

This chain is Small ribosomal subunit protein uS9, found in Brucella anthropi (strain ATCC 49188 / DSM 6882 / CCUG 24695 / JCM 21032 / LMG 3331 / NBRC 15819 / NCTC 12168 / Alc 37) (Ochrobactrum anthropi).